The sequence spans 123 residues: MPTVNQLIRKPRVAPVKRNKVPALQSNPQKRGVCTRVYTTTPKKPNSALRKVAKIRLTNGFEVIGYIPGEGHNLQEHSVVMIRGGRVKDLPGVRYHIIRGLLDTQGVKNRKQRRSKYGAKRPK.

Aspartate 89 is modified (3-methylthioaspartic acid).

It belongs to the universal ribosomal protein uS12 family. Part of the 30S ribosomal subunit. Contacts proteins S8 and S17. May interact with IF1 in the 30S initiation complex.

Functionally, with S4 and S5 plays an important role in translational accuracy. Its function is as follows. Interacts with and stabilizes bases of the 16S rRNA that are involved in tRNA selection in the A site and with the mRNA backbone. Located at the interface of the 30S and 50S subunits, it traverses the body of the 30S subunit contacting proteins on the other side and probably holding the rRNA structure together. The combined cluster of proteins S8, S12 and S17 appears to hold together the shoulder and platform of the 30S subunit. This chain is Small ribosomal subunit protein uS12, found in Bartonella tribocorum (strain CIP 105476 / IBS 506).